The primary structure comprises 225 residues: 7-cyano-7-deazaguanine synthase (225 aa).

9–19 (YSGGLDSTTCL) is a binding site for ATP. Residues C188, C198, C201, and C204 each coordinate Zn(2+).

Belongs to the QueC family. Zn(2+) is required as a cofactor.

It carries out the reaction 7-carboxy-7-deazaguanine + NH4(+) + ATP = 7-cyano-7-deazaguanine + ADP + phosphate + H2O + H(+). It functions in the pathway purine metabolism; 7-cyano-7-deazaguanine biosynthesis. In terms of biological role, catalyzes the ATP-dependent conversion of 7-carboxy-7-deazaguanine (CDG) to 7-cyano-7-deazaguanine (preQ(0)). This chain is 7-cyano-7-deazaguanine synthase, found in Citrifermentans bemidjiense (strain ATCC BAA-1014 / DSM 16622 / JCM 12645 / Bem) (Geobacter bemidjiensis).